The following is a 101-amino-acid chain: Defensin-like protein 222 (101 aa).

The N-terminal stretch at 1 to 21 (MRTIVLFSTLMILVLSCMSNA) is a signal peptide. 3 disulfides stabilise this stretch: Cys-68–Cys-85, Cys-71–Cys-90, and Cys-75–Cys-92.

Belongs to the DEFL family.

Its subcellular location is the secreted. The sequence is that of Defensin-like protein 222 from Arabidopsis thaliana (Mouse-ear cress).